Here is a 561-residue protein sequence, read N- to C-terminus: (+)-alpha-pinene synthase TPS2FN (561 aa).

(2E)-geranyl diphosphate contacts are provided by arginine 276, aspartate 313, aspartate 317, arginine 455, and aspartate 458. Mg(2+) is bound by residues aspartate 313 and aspartate 317. The short motif at 313 to 317 is the DDXXD motif element; it reads DDIYD. Mg(2+)-binding residues include aspartate 458, threonine 462, and glutamate 466.

It belongs to the terpene synthase family. Tpsb subfamily. The cofactor is Mg(2+). Requires Mn(2+) as cofactor. Expressed in glandular trichomes two to four weeks after flowering onset.

It catalyses the reaction (2E)-geranyl diphosphate = (1R,5R)-alpha-pinene + diphosphate. The enzyme catalyses (2E)-geranyl diphosphate = (4S)-limonene + diphosphate. It carries out the reaction (2E)-geranyl diphosphate = sabinene + diphosphate. The catalysed reaction is (2E)-geranyl diphosphate = beta-phellandrene + diphosphate. It catalyses the reaction (2E)-geranyl diphosphate = camphene + diphosphate. The enzyme catalyses (2E)-geranyl diphosphate = isoterpinolene + diphosphate. Its pathway is secondary metabolite biosynthesis; terpenoid biosynthesis. It participates in terpene metabolism; (-)-alpha-pinene biosynthesis; (-)-alpha-pinene from geranyl diphosphate: step 1/1. Its function is as follows. Involved in monoterpene (C10) olefins biosynthesis, constituants of cannabinoids and terpenoids-rich resins. Catalyzes mainly the conversion of (2E)-geranyl diphosphate to (+)-alpha-pinene, and also produces minor products such as camphene, sabinene, beta-phellandrene, (-)-limonene and isoterpinolene. In Cannabis sativa (Hemp), this protein is (+)-alpha-pinene synthase TPS2FN.